The chain runs to 188 residues: Adenine phosphoribosyltransferase (188 aa).

134–138 (ATGGS) contributes to the AMP binding site.

It belongs to the purine/pyrimidine phosphoribosyltransferase family. As to quaternary structure, homodimer. It depends on Mg(2+) as a cofactor.

The protein localises to the cytoplasm. The protein resides in the nucleus. The catalysed reaction is AMP + diphosphate = 5-phospho-alpha-D-ribose 1-diphosphate + adenine. The protein operates within purine metabolism; AMP biosynthesis via salvage pathway; AMP from adenine: step 1/1. Its function is as follows. Catalyzes a salvage reaction resulting in the formation of AMP, that is energically less costly than de novo synthesis. The protein is Adenine phosphoribosyltransferase (APT1) of Candida albicans (strain SC5314 / ATCC MYA-2876) (Yeast).